The primary structure comprises 190 residues: Peptide deformylase (190 aa).

Fe cation is bound by residues Cys-94 and His-136. Glu-137 is a catalytic residue. His-140 provides a ligand contact to Fe cation.

It belongs to the polypeptide deformylase family. It depends on Fe(2+) as a cofactor.

It carries out the reaction N-terminal N-formyl-L-methionyl-[peptide] + H2O = N-terminal L-methionyl-[peptide] + formate. In terms of biological role, removes the formyl group from the N-terminal Met of newly synthesized proteins. Requires at least a dipeptide for an efficient rate of reaction. N-terminal L-methionine is a prerequisite for activity but the enzyme has broad specificity at other positions. In Chlorobium luteolum (strain DSM 273 / BCRC 81028 / 2530) (Pelodictyon luteolum), this protein is Peptide deformylase.